The sequence spans 878 residues: F-box DNA helicase protein 1 (878 aa).

Residues 8-56 (SCKFYRLPLEIIPLICRFLSVQDIQSFIRVFPSFQTILDSSNDLFWKKK) form the F-box domain.

This sequence belongs to the helicase family. UvrD subfamily. Part of the E3 ubiquitin ligase Skp1-Cullin-1-F-box (SCF) complex. Interacts with skp1 and ssb1. Mg(2+) is required as a cofactor. The cofactor is Mn(2+).

The protein localises to the cytoplasm. The protein resides in the nucleus. It catalyses the reaction Couples ATP hydrolysis with the unwinding of duplex DNA by translocating in the 3'-5' direction.. The enzyme catalyses ATP + H2O = ADP + phosphate + H(+). The protein operates within protein modification; protein ubiquitination. In terms of biological role, involved in ATP-dependent DNA-unwinding in a 3' to 5' direction, and ATP-ase activities stimulated by the single-stranded DNA-binding protein ssb1. Essential for viability and normal growth of stationary phase cells and in the absence of either srs2 or rqh1 DNA helicase. Involved in DNA recombination repair of strand breaks and stalled or collapsed replication forks, on the rhp51-dependent pathway: promotes rhp51 filament dissolution from stalled forks, thereby inhibiting homologous recombination and preventing excessive recombination. Ubiquitination and DNA helicase activities are essential for controlling rhp51-dependent recombination in the absence of rad22. Plays a role in the processing of toxic recombination intermediates. Promotes proper chromosome segregation. This chain is F-box DNA helicase protein 1 (fbh1), found in Schizosaccharomyces pombe (strain 972 / ATCC 24843) (Fission yeast).